Reading from the N-terminus, the 221-residue chain is Endonuclease V (221 aa).

Asp-43 and Asp-109 together coordinate Mg(2+).

The protein belongs to the endonuclease V family. Mg(2+) is required as a cofactor.

It localises to the cytoplasm. The enzyme catalyses Endonucleolytic cleavage at apurinic or apyrimidinic sites to products with a 5'-phosphate.. DNA repair enzyme involved in the repair of deaminated bases. Selectively cleaves double-stranded DNA at the second phosphodiester bond 3' to a deoxyinosine leaving behind the intact lesion on the nicked DNA. This chain is Endonuclease V, found in Petrotoga mobilis (strain DSM 10674 / SJ95).